Consider the following 205-residue polypeptide: dITP/XTP pyrophosphatase (205 aa).

11-16 is a binding site for substrate; it reads TKNMGK. E44 and D73 together coordinate Mg(2+). The Proton acceptor role is filled by D73. Residues S74, 158 to 161, K181, and 186 to 187 each bind substrate; these read FGYD and HR.

This sequence belongs to the HAM1 NTPase family. As to quaternary structure, homodimer. Requires Mg(2+) as cofactor.

The enzyme catalyses XTP + H2O = XMP + diphosphate + H(+). It carries out the reaction dITP + H2O = dIMP + diphosphate + H(+). It catalyses the reaction ITP + H2O = IMP + diphosphate + H(+). In terms of biological role, pyrophosphatase that catalyzes the hydrolysis of nucleoside triphosphates to their monophosphate derivatives, with a high preference for the non-canonical purine nucleotides XTP (xanthosine triphosphate), dITP (deoxyinosine triphosphate) and ITP. Seems to function as a house-cleaning enzyme that removes non-canonical purine nucleotides from the nucleotide pool, thus preventing their incorporation into DNA/RNA and avoiding chromosomal lesions. This chain is dITP/XTP pyrophosphatase, found in Bacillus thuringiensis subsp. konkukian (strain 97-27).